The chain runs to 676 residues: Cysteine-rich receptor-like protein kinase 8 (676 aa).

The signal sequence occupies residues 1 to 34; sequence MYIVSMFGLAGLEALICFIFLFLFSFLTSFKASA. At 35-291 the chain is on the extracellular side; sequence QNPFYLNHDC…IPGKSGNSTV (257 aa). 2 consecutive Gnk2-homologous domains span residues 38 to 142 and 151 to 255; these read FYLN…HKNF and ELIM…LYAF. Residues Asn46, Asn53, Asn71, Asn114, Asn159, Asn187, Asn257, and Asn288 are each glycosylated (N-linked (GlcNAc...) asparagine). A helical transmembrane segment spans residues 292-312; that stretch reads LVVAIVVLAVLLFIALVGYCF. The Cytoplasmic portion of the chain corresponds to 313–676; it reads LAQRTKKTFD…DELITDLYPR (364 aa). Positions 353–639 constitute a Protein kinase domain; that stretch reads FAESNKIGRG…TLPVPRQPGF (287 aa). Residues 359-367 and Lys381 each bind ATP; that span reads IGRGGFGEV. Tyr426 bears the Phosphotyrosine mark. Asp478 acts as the Proton acceptor in catalysis. Ser482 is modified (phosphoserine). Thr518 is subject to Phosphothreonine. The residue at position 526 (Tyr526) is a Phosphotyrosine. The segment at 640–666 is disordered; it reads FIQSSPVKDPTDSDQSTTTKSTPASID. Low complexity predominate over residues 652 to 662; sequence SDQSTTTKSTP.

It belongs to the protein kinase superfamily. Ser/Thr protein kinase family. CRK subfamily.

The protein localises to the membrane. It catalyses the reaction L-seryl-[protein] + ATP = O-phospho-L-seryl-[protein] + ADP + H(+). The catalysed reaction is L-threonyl-[protein] + ATP = O-phospho-L-threonyl-[protein] + ADP + H(+). The sequence is that of Cysteine-rich receptor-like protein kinase 8 (CRK8) from Arabidopsis thaliana (Mouse-ear cress).